Reading from the N-terminus, the 79-residue chain is Sec-independent protein translocase protein TatA (79 aa).

A helical transmembrane segment spans residues 1–21; that stretch reads MGSLSIWHWIVVIAVVLLLFG. Positions 43-60 are enriched in basic and acidic residues; the sequence is LQDDEKTAEKPDPVKSID. The interval 43–79 is disordered; sequence LQDDEKTAEKPDPVKSIDHNAPTAAAPTRTDVGSKAV.

This sequence belongs to the TatA/E family. In terms of assembly, the Tat system comprises two distinct complexes: a TatABC complex, containing multiple copies of TatA, TatB and TatC subunits, and a separate TatA complex, containing only TatA subunits. Substrates initially bind to the TatABC complex, which probably triggers association of the separate TatA complex to form the active translocon.

It localises to the cell inner membrane. Functionally, part of the twin-arginine translocation (Tat) system that transports large folded proteins containing a characteristic twin-arginine motif in their signal peptide across membranes. TatA could form the protein-conducting channel of the Tat system. The polypeptide is Sec-independent protein translocase protein TatA (Rhodopseudomonas palustris (strain BisB5)).